Here is a 328-residue protein sequence, read N- to C-terminus: Putative P2Y purinoceptor 10 (328 aa).

At 1-27 the chain is on the extracellular side; that stretch reads MGSNSTSSAESNCNATYLPFQYSLYAT. Asn4 and Asn14 each carry an N-linked (GlcNAc...) asparagine glycan. The helical transmembrane segment at 28-48 threads the bilayer; the sequence is TYIFIFIPGLLANSAALWVLC. Residues 49-56 are Cytoplasmic-facing; the sequence is RFISKKNK. Residues 57–77 traverse the membrane as a helical segment; that stretch reads AIIFMINLSVADLAHILSLPL. Topologically, residues 78–91 are extracellular; that stretch reads RIYYYINRHWPFQR. A helical membrane pass occupies residues 92-112; it reads ALCLLCFYLKYLNMYASIFFL. A disulfide bond links Cys94 and Cys170. Topologically, residues 113 to 137 are cytoplasmic; it reads TCISLQRCLFLLKPFRARNWKRRYD. The helical transmembrane segment at 138 to 158 threads the bilayer; that stretch reads VGISAVIWIVVGTACLPFPIL. The Extracellular segment spans residues 159 to 182; it reads RNAGLANSTDSCFADLGYKQMDAV. A helical transmembrane segment spans residues 183-203; it reads VLVTMVVIAELAGFVIPVITI. At 204 to 233 the chain is on the cytoplasmic side; the sequence is ACCTWKTTVSLKHPPIAFQGISERKKALRM. The chain crosses the membrane as a helical span at residues 234–254; it reads VFMCAAVFVICFTPYHINFIF. The Extracellular segment spans residues 255–277; it reads YTMVKESIITSCPTVKSTLYFHP. The helical transmembrane segment at 278 to 298 threads the bilayer; the sequence is FSLCLASLCCLLDPILYYFMA. Topologically, residues 299–328 are cytoplasmic; that stretch reads SEFRDQLSRHGSSVTRSRLMSRESGSSMVN.

The protein belongs to the G-protein coupled receptor 1 family.

Its subcellular location is the cell membrane. In terms of biological role, putative receptor for purines coupled to G-proteins. In Mus musculus (Mouse), this protein is Putative P2Y purinoceptor 10 (P2ry10).